A 60-amino-acid chain; its full sequence is ATP synthase subunit J, mitochondrial (60 aa).

A helical membrane pass occupies residues 13-32 (ILKPMLPFFLGGAIVFYGTV).

This sequence belongs to the ATPase j subunit family. F-type ATPases have 2 components, CF(1) - the catalytic core - and CF(0) - the membrane proton channel. In yeast, the dimeric form of ATP synthase consists of 17 polypeptides: alpha, beta, gamma, delta, epsilon, 4 (B), 5 (OSCP), 6 (A), 8, 9 (C), d, E (Tim11), f, g, h, i/j and k.

Its subcellular location is the mitochondrion membrane. Mitochondrial membrane ATP synthase (F(1)F(0) ATP synthase or Complex V) produces ATP from ADP in the presence of a proton gradient across the membrane which is generated by electron transport complexes of the respiratory chain. F-type ATPases consist of two structural domains, F(1) - containing the extramembraneous catalytic core and F(0) - containing the membrane proton channel, linked together by a central stalk and a peripheral stalk. During catalysis, ATP synthesis in the catalytic domain of F(1) is coupled via a rotary mechanism of the central stalk subunits to proton translocation. Part of the complex F(0) domain. Minor subunit located with subunit a in the membrane. This chain is ATP synthase subunit J, mitochondrial (atp18), found in Schizosaccharomyces pombe (strain 972 / ATCC 24843) (Fission yeast).